The primary structure comprises 299 residues: Glutamyl-Q tRNA(Asp) synthetase (299 aa).

Residues 9 to 13 (RFAPS) and Glu45 contribute to the L-glutamate site. Residues 12–22 (PSPTGPLHFGS) carry the 'HIGH' region motif. Positions 101, 103, and 118 each coordinate Zn(2+). The L-glutamate site is built by Tyr170 and Arg188. Residues 226–230 (KLSKS) carry the 'KMSKS' region motif. Lys229 is an ATP binding site. The tract at residues 279-299 (QLLPRQRQRDRATCAYERQRD) is disordered. The span at 285-299 (RQRDRATCAYERQRD) shows a compositional bias: basic and acidic residues.

This sequence belongs to the class-I aminoacyl-tRNA synthetase family. GluQ subfamily. Zn(2+) is required as a cofactor.

In terms of biological role, catalyzes the tRNA-independent activation of glutamate in presence of ATP and the subsequent transfer of glutamate onto a tRNA(Asp). Glutamate is transferred on the 2-amino-5-(4,5-dihydroxy-2-cyclopenten-1-yl) moiety of the queuosine in the wobble position of the QUC anticodon. The sequence is that of Glutamyl-Q tRNA(Asp) synthetase from Xanthomonas oryzae pv. oryzae (strain KACC10331 / KXO85).